A 142-amino-acid chain; its full sequence is HTH-type transcriptional regulator MntR (142 aa).

In terms of domain architecture, HTH dtxR-type spans 1-63 (MPTPSMEDYI…YEKYRGLVLT (63 aa)). The Mn(2+) site is built by Asp8, Glu11, His77, Glu99, Glu102, and His103.

The protein belongs to the DtxR/MntR family. In terms of assembly, homodimer.

It is found in the cytoplasm. With respect to regulation, DNA binding is strongly activated by Mn(2+). Its function is as follows. Central regulator of manganese homeostasis. The sequence is that of HTH-type transcriptional regulator MntR from Bacillus mycoides (strain KBAB4) (Bacillus weihenstephanensis).